The primary structure comprises 361 residues: 3-dehydroquinate synthase (361 aa).

NAD(+) is bound by residues 69 to 74 (DGEEYK), 103 to 107 (GVIGD), 127 to 128 (TT), lysine 140, lysine 149, and 167 to 170 (TLDT). The Zn(2+) site is built by glutamate 182, histidine 245, and histidine 262.

It belongs to the sugar phosphate cyclases superfamily. Dehydroquinate synthase family. Requires Co(2+) as cofactor. Zn(2+) is required as a cofactor. NAD(+) serves as cofactor.

The protein localises to the cytoplasm. It catalyses the reaction 7-phospho-2-dehydro-3-deoxy-D-arabino-heptonate = 3-dehydroquinate + phosphate. It participates in metabolic intermediate biosynthesis; chorismate biosynthesis; chorismate from D-erythrose 4-phosphate and phosphoenolpyruvate: step 2/7. In terms of biological role, catalyzes the conversion of 3-deoxy-D-arabino-heptulosonate 7-phosphate (DAHP) to dehydroquinate (DHQ). The sequence is that of 3-dehydroquinate synthase from Thioalkalivibrio sulfidiphilus (strain HL-EbGR7).